A 391-amino-acid chain; its full sequence is 8-amino-7-oxononanoate synthase (391 aa).

A substrate-binding site is contributed by Arg19. 106 to 107 (GY) is a binding site for pyridoxal 5'-phosphate. Substrate is bound at residue His131. Pyridoxal 5'-phosphate is bound by residues Ser178, His206, and Thr234. Lys237 is subject to N6-(pyridoxal phosphate)lysine. Thr353 contacts substrate.

Belongs to the class-II pyridoxal-phosphate-dependent aminotransferase family. BioF subfamily. As to quaternary structure, homodimer. Requires pyridoxal 5'-phosphate as cofactor.

The enzyme catalyses 6-carboxyhexanoyl-[ACP] + L-alanine + H(+) = (8S)-8-amino-7-oxononanoate + holo-[ACP] + CO2. The protein operates within cofactor biosynthesis; biotin biosynthesis. Its function is as follows. Catalyzes the decarboxylative condensation of pimeloyl-[acyl-carrier protein] and L-alanine to produce 8-amino-7-oxononanoate (AON), [acyl-carrier protein], and carbon dioxide. The protein is 8-amino-7-oxononanoate synthase of Pelobacter propionicus (strain DSM 2379 / NBRC 103807 / OttBd1).